The chain runs to 485 residues: Glutamyl-tRNA(Gln) amidotransferase subunit A (485 aa).

Active-site charge relay system residues include K78 and S153. The active-site Acyl-ester intermediate is the S177.

This sequence belongs to the amidase family. GatA subfamily. As to quaternary structure, heterotrimer of A, B and C subunits.

The catalysed reaction is L-glutamyl-tRNA(Gln) + L-glutamine + ATP + H2O = L-glutaminyl-tRNA(Gln) + L-glutamate + ADP + phosphate + H(+). Functionally, allows the formation of correctly charged Gln-tRNA(Gln) through the transamidation of misacylated Glu-tRNA(Gln) in organisms which lack glutaminyl-tRNA synthetase. The reaction takes place in the presence of glutamine and ATP through an activated gamma-phospho-Glu-tRNA(Gln). The sequence is that of Glutamyl-tRNA(Gln) amidotransferase subunit A from Geobacter sulfurreducens (strain ATCC 51573 / DSM 12127 / PCA).